Here is a 225-residue protein sequence, read N- to C-terminus: THAP domain-containing protein 1 (225 aa).

A THAP-type zinc finger spans residues 5–57 (CSAYGCKNRYDKDKPISFHKFPLKRPLLCRKWEAAVRRADFKPTKYSSICSDH). A coiled-coil region spans residues 139–194 (VEDTVHQRRRIQQLEEQVDKLRKKLKIANQKCRRQERSLEKLEREVSEYREAKGSG).

It belongs to the THAP1 family.

It localises to the nucleus. It is found in the nucleoplasm. In terms of biological role, DNA-binding transcription regulator that regulates endothelial cell proliferation and G1/S cell-cycle progression. Specifically binds the 5'-[AT]NTNN[GT]GGCA[AGT]-3' core DNA sequence and acts by modulating expression of pRB-E2F cell-cycle target genes. In Xenopus tropicalis (Western clawed frog), this protein is THAP domain-containing protein 1 (thap1).